The chain runs to 278 residues: 4-deoxy-L-threo-5-hexosulose-uronate ketol-isomerase (278 aa).

Zn(2+) contacts are provided by H196, H198, E203, and H245.

It belongs to the KduI family. In terms of assembly, homohexamer. It depends on Zn(2+) as a cofactor.

The catalysed reaction is 5-dehydro-4-deoxy-D-glucuronate = 3-deoxy-D-glycero-2,5-hexodiulosonate. Its pathway is glycan metabolism; pectin degradation; 2-dehydro-3-deoxy-D-gluconate from pectin: step 4/5. Catalyzes the isomerization of 5-dehydro-4-deoxy-D-glucuronate to 3-deoxy-D-glycero-2,5-hexodiulosonate. This chain is 4-deoxy-L-threo-5-hexosulose-uronate ketol-isomerase, found in Escherichia coli O8 (strain IAI1).